Reading from the N-terminus, the 390-residue chain is Argininosuccinate synthase (390 aa).

6–14 (SYSGGLDTT) contributes to the ATP binding site. Residue Tyr83 coordinates L-citrulline. An ATP-binding site is contributed by Gly113. Residues Thr115, Asn119, and Asp120 each coordinate L-aspartate. Asn119 is an L-citrulline binding site. L-citrulline contacts are provided by Arg123, Ser169, Ser178, Glu254, and Tyr266.

Belongs to the argininosuccinate synthase family. Type 1 subfamily. In terms of assembly, homotetramer.

It is found in the cytoplasm. The enzyme catalyses L-citrulline + L-aspartate + ATP = 2-(N(omega)-L-arginino)succinate + AMP + diphosphate + H(+). The protein operates within amino-acid biosynthesis; L-arginine biosynthesis; L-arginine from L-ornithine and carbamoyl phosphate: step 2/3. The chain is Argininosuccinate synthase from Archaeoglobus fulgidus (strain ATCC 49558 / DSM 4304 / JCM 9628 / NBRC 100126 / VC-16).